The sequence spans 123 residues: Large ribosomal subunit protein bL12 (123 aa).

The protein belongs to the bacterial ribosomal protein bL12 family. As to quaternary structure, homodimer. Part of the ribosomal stalk of the 50S ribosomal subunit. Forms a multimeric L10(L12)X complex, where L10 forms an elongated spine to which 2 to 4 L12 dimers bind in a sequential fashion. Binds GTP-bound translation factors.

In terms of biological role, forms part of the ribosomal stalk which helps the ribosome interact with GTP-bound translation factors. Is thus essential for accurate translation. The chain is Large ribosomal subunit protein bL12 from Chromobacterium violaceum (strain ATCC 12472 / DSM 30191 / JCM 1249 / CCUG 213 / NBRC 12614 / NCIMB 9131 / NCTC 9757 / MK).